An 899-amino-acid polypeptide reads, in one-letter code: Pre-mRNA-splicing factor 6 (899 aa).

The disordered stretch occupies residues 1-65 (MERPSFLDQE…QSQPKDDEDD (65 aa)). Positions 28-51 (TKEKQVVSNDDKGRRIPKRYRENL) are enriched in basic and acidic residues. HAT repeat units lie at residues 221–253 (EDLQ…LEEK), 255–287 (RKFS…LHES), 289–318 (VHYC…DLES), 319–350 (TTVN…FEAD), 352–381 (AQVI…LQSY), 383–414 (NAKM…RNNP), 493–525 (PHSK…ATES), 545–578 (NSDD…DTRQ), 608–645 (LQLD…FLRY), 648–680 (LNEE…IYHS), 682–714 (GNIE…IDEI), 751–783 (GNLD…LFKH), and 819–851 (AQYE…TYAR).

Component of the U4/U6-U5 tri-snRNP complex composed of the U4, U6 and U5 snRNAs and at least PRP3, PRP4, PRP6, PRP8, PRP18, PRP31, PRP38, SNU13, SNU23, SNU66, SNU114, SPP381, SMB1, SMD1, SMD2, SMD3, SMX2, SMX3, LSM2, LSM3, LSM4, LSM5, LSM6, LSM7, LSM8, BRR2 and DIB1.

The protein localises to the nucleus. In terms of biological role, participates in pre-mRNA splicing. Part of the U4/U5/U6 tri-snRNP complex, one of the building blocks of the spliceosome. This is Pre-mRNA-splicing factor 6 (PRP6) from Saccharomyces cerevisiae (strain ATCC 204508 / S288c) (Baker's yeast).